Reading from the N-terminus, the 296-residue chain is Ribosomal RNA small subunit methyltransferase H (296 aa).

S-adenosyl-L-methionine is bound by residues 38-40 (GAH), E57, F80, D103, and H110.

The protein belongs to the methyltransferase superfamily. RsmH family.

It is found in the cytoplasm. The enzyme catalyses cytidine(1402) in 16S rRNA + S-adenosyl-L-methionine = N(4)-methylcytidine(1402) in 16S rRNA + S-adenosyl-L-homocysteine + H(+). Functionally, specifically methylates the N4 position of cytidine in position 1402 (C1402) of 16S rRNA. The sequence is that of Ribosomal RNA small subunit methyltransferase H from Borrelia garinii subsp. bavariensis (strain ATCC BAA-2496 / DSM 23469 / PBi) (Borreliella bavariensis).